A 505-amino-acid polypeptide reads, in one-letter code: L-arabinose isomerase (505 aa).

Mn(2+) is bound by residues Glu310, Glu337, His354, and His453.

This sequence belongs to the arabinose isomerase family. The cofactor is Mn(2+).

It catalyses the reaction beta-L-arabinopyranose = L-ribulose. It functions in the pathway carbohydrate degradation; L-arabinose degradation via L-ribulose; D-xylulose 5-phosphate from L-arabinose (bacterial route): step 1/3. Catalyzes the conversion of L-arabinose to L-ribulose. The chain is L-arabinose isomerase from Clavibacter sepedonicus (Clavibacter michiganensis subsp. sepedonicus).